We begin with the raw amino-acid sequence, 448 residues long: Phosphoglucosamine mutase (448 aa).

Ser104 (phosphoserine intermediate) is an active-site residue. Mg(2+)-binding residues include Ser104, Asp243, Asp245, and Asp247. Ser104 bears the Phosphoserine mark.

The protein belongs to the phosphohexose mutase family. Mg(2+) is required as a cofactor. Post-translationally, activated by phosphorylation.

The enzyme catalyses alpha-D-glucosamine 1-phosphate = D-glucosamine 6-phosphate. In terms of biological role, catalyzes the conversion of glucosamine-6-phosphate to glucosamine-1-phosphate. The polypeptide is Phosphoglucosamine mutase (Xylella fastidiosa (strain 9a5c)).